Consider the following 244-residue polypeptide: MKILIPTAKELNTQVAQIEPESLSEKTKLIIRALSQYSVADLAQLYQIRPEKAKEEYQRIQKLQNETALTYPALYLFDGLMYRNIKRKNLTKEEEQYVQNHLLITSSLYGVIPALAPIAPHRLDFMTKLKVEKQSLKKLWTETYGQAVADQEILLSLLSSEFEEVFPKEVRDKMIRFKFMEEKDGKRKIHSTISKKARGQFLSYLIENHITKLSDIKQSSFSGFKFQENLSQEREFVFVKKVDG.

The protein belongs to the UPF0246 family.

The protein is UPF0246 protein SGO_1307 of Streptococcus gordonii (strain Challis / ATCC 35105 / BCRC 15272 / CH1 / DL1 / V288).